The primary structure comprises 378 residues: Ribosomal RNA large subunit methyltransferase G (378 aa).

It belongs to the methyltransferase superfamily. RlmG family.

Its subcellular location is the cytoplasm. It carries out the reaction guanosine(1835) in 23S rRNA + S-adenosyl-L-methionine = N(2)-methylguanosine(1835) in 23S rRNA + S-adenosyl-L-homocysteine + H(+). Specifically methylates the guanine in position 1835 (m2G1835) of 23S rRNA. This is Ribosomal RNA large subunit methyltransferase G from Shigella boydii serotype 4 (strain Sb227).